The chain runs to 181 residues: Adenine phosphoribosyltransferase (181 aa).

The protein belongs to the purine/pyrimidine phosphoribosyltransferase family. Homodimer.

It is found in the cytoplasm. It carries out the reaction AMP + diphosphate = 5-phospho-alpha-D-ribose 1-diphosphate + adenine. It functions in the pathway purine metabolism; AMP biosynthesis via salvage pathway; AMP from adenine: step 1/1. Catalyzes a salvage reaction resulting in the formation of AMP, that is energically less costly than de novo synthesis. In Vibrio vulnificus (strain CMCP6), this protein is Adenine phosphoribosyltransferase.